The sequence spans 638 residues: Chaperone protein HtpG (638 aa).

Positions 1–346 (MSQQETHGFQ…SNDLPLNVSR (346 aa)) are a; substrate-binding. The interval 347 to 563 (EILQDNKVTT…EGEMSTQMIK (217 aa)) is b. The tract at residues 564–638 (LMQAAGQDVP…MNQMLLASVK (75 aa)) is c.

The protein belongs to the heat shock protein 90 family. Homodimer.

It is found in the cytoplasm. Its function is as follows. Molecular chaperone. Has ATPase activity. In Shewanella pealeana (strain ATCC 700345 / ANG-SQ1), this protein is Chaperone protein HtpG.